Here is a 136-residue protein sequence, read N- to C-terminus: Protein NrdI (136 aa).

It belongs to the NrdI family.

Probably involved in ribonucleotide reductase function. This Salmonella arizonae (strain ATCC BAA-731 / CDC346-86 / RSK2980) protein is Protein NrdI.